The following is a 159-amino-acid chain: Urease subunit beta 2 (159 aa).

The tract at residues 1-24 (MAKEPTKAAHPQPEQTKTNHKAHR) is disordered.

Belongs to the urease beta subunit family. In terms of assembly, heterotrimer of UreA (gamma), UreB (beta) and UreC (alpha) subunits. Three heterotrimers associate to form the active enzyme.

It localises to the cytoplasm. It carries out the reaction urea + 2 H2O + H(+) = hydrogencarbonate + 2 NH4(+). It participates in nitrogen metabolism; urea degradation; CO(2) and NH(3) from urea (urease route): step 1/1. Its function is as follows. Disrupting the ure2 operon has no effect on urease activity, or pathogen survival in BALB/c mice when inoculated by gavage, but confers slightly enhanced resistance to low pH killing in vitro. The chain is Urease subunit beta 2 from Brucella suis biovar 1 (strain 1330).